We begin with the raw amino-acid sequence, 294 residues long: Cytidine deaminase (294 aa).

CMP/dCMP-type deaminase domains follow at residues 48–168 (DEDA…FGPK) and 186–294 (LTGD…VLLG). 89-91 (NME) is a binding site for substrate. Residue His102 participates in Zn(2+) binding. The active-site Proton donor is Glu104. Residues Cys129 and Cys132 each contribute to the Zn(2+) site.

The protein belongs to the cytidine and deoxycytidylate deaminase family. Homodimer. Requires Zn(2+) as cofactor.

The catalysed reaction is cytidine + H2O + H(+) = uridine + NH4(+). It carries out the reaction 2'-deoxycytidine + H2O + H(+) = 2'-deoxyuridine + NH4(+). This enzyme scavenges exogenous and endogenous cytidine and 2'-deoxycytidine for UMP synthesis. The protein is Cytidine deaminase of Salmonella agona (strain SL483).